A 344-amino-acid chain; its full sequence is L-threonine 3-dehydrogenase (344 aa).

C42 lines the Zn(2+) pocket. Catalysis depends on charge relay system residues T44 and H47. 6 residues coordinate Zn(2+): H67, E68, C97, C100, C103, and C111. Residues I179, D199, R204, 266–268 (LGI), and 290–291 (IY) each bind NAD(+).

It belongs to the zinc-containing alcohol dehydrogenase family. As to quaternary structure, homotetramer. Zn(2+) is required as a cofactor.

It localises to the cytoplasm. It carries out the reaction L-threonine + NAD(+) = (2S)-2-amino-3-oxobutanoate + NADH + H(+). It participates in amino-acid degradation; L-threonine degradation via oxydo-reductase pathway; glycine from L-threonine: step 1/2. Functionally, catalyzes the NAD(+)-dependent oxidation of L-threonine to 2-amino-3-ketobutyrate. This Chelativorans sp. (strain BNC1) protein is L-threonine 3-dehydrogenase.